Consider the following 354-residue polypeptide: UDP-glucose 4-epimerase GEPI42 (354 aa).

11 to 42 provides a ligand contact to NAD(+); sequence TILVTGGAGFIGSHTVVQLLKQGFHVSIIDNL. Serine 137 lines the substrate pocket. Tyrosine 161 serves as the catalytic Proton acceptor.

Belongs to the NAD(P)-dependent epimerase/dehydratase family. It depends on NAD(+) as a cofactor.

The enzyme catalyses UDP-alpha-D-glucose = UDP-alpha-D-galactose. It participates in carbohydrate metabolism; galactose metabolism. This Cyamopsis tetragonoloba (Guar) protein is UDP-glucose 4-epimerase GEPI42.